A 250-amino-acid chain; its full sequence is Intermembrane phospholipid transport system lipoprotein MlaA (250 aa).

The N-terminal stretch at 1 to 18 (MKTKTILTALLSAIALTG) is a signal peptide. Cys-19 carries N-palmitoyl cysteine lipidation. The S-diacylglycerol cysteine moiety is linked to residue Cys-19.

The protein belongs to the MlaA family.

It localises to the cell outer membrane. Involved in a phospholipid transport pathway that maintains lipid asymmetry in the outer membrane by retrograde trafficking of phospholipids from the outer membrane to the inner membrane. The sequence is that of Intermembrane phospholipid transport system lipoprotein MlaA from Haemophilus influenzae (strain ATCC 51907 / DSM 11121 / KW20 / Rd).